The chain runs to 141 residues: Large ribosomal subunit protein uL14 (141 aa).

It belongs to the universal ribosomal protein uL14 family. Part of the 50S ribosomal subunit. Forms a cluster with proteins L3 and L24e, part of which may contact the 16S rRNA in 2 intersubunit bridges.

Its function is as follows. Binds to 23S rRNA. Forms part of two intersubunit bridges in the 70S ribosome. This is Large ribosomal subunit protein uL14 from Thermofilum pendens (strain DSM 2475 / Hrk 5).